Here is a 223-residue protein sequence, read N- to C-terminus: Putative UPF0607 protein LOC392364 (223 aa).

Positions 110 to 138 (KMEVRAEEPKEATEVKDQVETQEQEDNKR) are enriched in basic and acidic residues. The tract at residues 110–223 (KMEVRAEEPK…GRTPPARQHG (114 aa)) is disordered. Polar residues-rich tracts occupy residues 145–163 (EAAS…TSPR) and 174–186 (QLKS…QTDK).

The protein belongs to the UPF0607 family.

The chain is Putative UPF0607 protein LOC392364 from Homo sapiens (Human).